Consider the following 141-residue polypeptide: Thioredoxin-like protein SkfH (141 aa).

A Thioredoxin domain is found at 2-141 (KDEQMLTEWP…DKMLKKIAGL (140 aa)). Cysteines 41 and 44 form a disulfide.

In terms of biological role, required for production of the bacteriocin SkfA. This Bacillus subtilis (strain 168) protein is Thioredoxin-like protein SkfH.